A 561-amino-acid chain; its full sequence is 2-methylisocitrate lyase, mitochondrial (561 aa).

The segment at 154–177 is disordered; it reads KAQSMHDRKQWDTRRKMSPDERSK. Over residues 157–177 the composition is skewed to basic and acidic residues; the sequence is SMHDRKQWDTRRKMSPDERSK. The active site involves Cys228.

It belongs to the isocitrate lyase/PEP mutase superfamily. Isocitrate lyase family. Mg(2+) is required as a cofactor.

Its subcellular location is the mitochondrion matrix. It carries out the reaction (2S,3R)-3-hydroxybutane-1,2,3-tricarboxylate = pyruvate + succinate. It participates in organic acid metabolism; propanoate degradation. In terms of biological role, component of the methylcitrate cycle that catalyzes the formation of pyruvate and succinate from 2-methylisocitrate during the metabolism of endogenous propionyl-CoA. Plays an important role for growth and development, but also in antagonism, root colonization and induction of defense responses in plants. In Hypocrea atroviridis (strain ATCC 20476 / IMI 206040) (Trichoderma atroviride), this protein is 2-methylisocitrate lyase, mitochondrial.